Here is a 37-residue protein sequence, read N- to C-terminus: Chorion class CB protein PCH12 (37 aa).

Residues 1–26 (DGIFPTVGAGDVWYGCGDGAVGIVAE) are central domain. Positions 27 to 37 (TPFASTTTNPA) are right arm.

Belongs to the chorion protein family.

In terms of biological role, this protein is one of many from the eggshell of the silk moth. The polypeptide is Chorion class CB protein PCH12 (Antheraea polyphemus (Polyphemus moth)).